The chain runs to 312 residues: DNA-directed RNA polymerase subunit alpha (312 aa).

Positions 1–226 are alpha N-terminal domain (alpha-NTD); that stretch reads MIEFKKPNIT…EHFKAFESAD (226 aa). The alpha C-terminal domain (alpha-CTD) stretch occupies residues 243 to 312; sequence KEKKLEMTIE…DLGLSLRQED (70 aa).

The protein belongs to the RNA polymerase alpha chain family. In terms of assembly, homodimer. The RNAP catalytic core consists of 2 alpha, 1 beta, 1 beta' and 1 omega subunit. When a sigma factor is associated with the core the holoenzyme is formed, which can initiate transcription.

It catalyses the reaction RNA(n) + a ribonucleoside 5'-triphosphate = RNA(n+1) + diphosphate. Its function is as follows. DNA-dependent RNA polymerase catalyzes the transcription of DNA into RNA using the four ribonucleoside triphosphates as substrates. The polypeptide is DNA-directed RNA polymerase subunit alpha (Lactobacillus delbrueckii subsp. bulgaricus (strain ATCC BAA-365 / Lb-18)).